Reading from the N-terminus, the 465-residue chain is Ribulose bisphosphate carboxylase large chain (465 aa).

Lysine 4 carries the post-translational modification N6,N6,N6-trimethyllysine. Substrate contacts are provided by residue 113 and threonine 163. The active-site Proton acceptor is the lysine 165. Lysine 167 is a substrate binding site. The Mg(2+) site is built by lysine 191, aspartate 193, and glutamate 194. The residue at position 191 (lysine 191) is an N6-carboxylysine. The Proton acceptor role is filled by histidine 284. 3 residues coordinate substrate: arginine 285, histidine 317, and serine 369.

This sequence belongs to the RuBisCO large chain family. Type I subfamily. In terms of assembly, heterohexadecamer of 8 large chains and 8 small chains; disulfide-linked. The disulfide link is formed within the large subunit homodimers. Mg(2+) is required as a cofactor. The disulfide bond which can form in the large chain dimeric partners within the hexadecamer appears to be associated with oxidative stress and protein turnover.

It localises to the plastid. It is found in the chloroplast. It catalyses the reaction 2 (2R)-3-phosphoglycerate + 2 H(+) = D-ribulose 1,5-bisphosphate + CO2 + H2O. It carries out the reaction D-ribulose 1,5-bisphosphate + O2 = 2-phosphoglycolate + (2R)-3-phosphoglycerate + 2 H(+). In terms of biological role, ruBisCO catalyzes two reactions: the carboxylation of D-ribulose 1,5-bisphosphate, the primary event in carbon dioxide fixation, as well as the oxidative fragmentation of the pentose substrate in the photorespiration process. Both reactions occur simultaneously and in competition at the same active site. The chain is Ribulose bisphosphate carboxylase large chain from Cornus obliqua (Silky dogwood).